Reading from the N-terminus, the 1613-residue chain is NAD-specific glutamate dehydrogenase (1613 aa).

Residue Lys849 is part of the active site.

Belongs to the Glu/Leu/Phe/Val dehydrogenases family.

The enzyme catalyses L-glutamate + NAD(+) + H2O = 2-oxoglutarate + NH4(+) + NADH + H(+). Its function is as follows. Involved in arginine catabolism by converting L-glutamate, into 2-oxoglutarate, which is then channeled into the tricarboxylic acid cycle. The polypeptide is NAD-specific glutamate dehydrogenase (Halomonas elongata (strain ATCC 33173 / DSM 2581 / NBRC 15536 / NCIMB 2198 / 1H9)).